Reading from the N-terminus, the 142-residue chain is UPF0332 protein PH1297 (142 aa).

The protein belongs to the UPF0332 family.

The protein is UPF0332 protein PH1297 of Pyrococcus horikoshii (strain ATCC 700860 / DSM 12428 / JCM 9974 / NBRC 100139 / OT-3).